Consider the following 843-residue polypeptide: Protein P (843 aa).

Positions 1-177 are terminal protein domain (TP); sequence MPLSYQHFRK…FCGSPYSWEQ (177 aa). The tract at residues 178–346 is spacer; that stretch reads DLQHGRLVIQ…YCLCHIVNLI (169 aa). Disordered stretches follow at residues 219–258 and 297–316; these read RKSRLGPQPTQGQLAGRPQGGSGSIRARVHPSPWGTVGVE and SSGHAVELHHFPPNSSRSQS. The tract at residues 347–690 is polymerase/reverse transcriptase domain (RT); sequence DDWGPCAEHG…YLNLYPVARQ (344 aa). One can recognise a Reverse transcriptase domain in the interval 357–600; the sequence is EHRIRTPRTP…YSLNFMGYVI (244 aa). Mg(2+) contacts are provided by D429, D551, and D552.

Belongs to the hepadnaviridae P protein family.

It catalyses the reaction DNA(n) + a 2'-deoxyribonucleoside 5'-triphosphate = DNA(n+1) + diphosphate. The enzyme catalyses Endonucleolytic cleavage to 5'-phosphomonoester.. Its activity is regulated as follows. Activated by host HSP70 and HSP40 in vitro to be able to bind the epsilon loop of the pgRNA. Because deletion of the RNase H region renders the protein partly chaperone-independent, the chaperones may be needed indirectly to relieve occlusion of the RNA-binding site by this domain. Inhibited by several reverse-transcriptase inhibitors: Lamivudine, Adefovir and Entecavir. Multifunctional enzyme that converts the viral RNA genome into dsDNA in viral cytoplasmic capsids. This enzyme displays a DNA polymerase activity that can copy either DNA or RNA templates, and a ribonuclease H (RNase H) activity that cleaves the RNA strand of RNA-DNA heteroduplexes in a partially processive 3'- to 5'-endonucleasic mode. Neo-synthesized pregenomic RNA (pgRNA) are encapsidated together with the P protein, and reverse-transcribed inside the nucleocapsid. Initiation of reverse-transcription occurs first by binding the epsilon loop on the pgRNA genome, and is initiated by protein priming, thereby the 5'-end of (-)DNA is covalently linked to P protein. Partial (+)DNA is synthesized from the (-)DNA template and generates the relaxed circular DNA (RC-DNA) genome. After budding and infection, the RC-DNA migrates in the nucleus, and is converted into a plasmid-like covalently closed circular DNA (cccDNA). The activity of P protein does not seem to be necessary for cccDNA generation, and is presumably released from (+)DNA by host nuclear DNA repair machinery. This is Protein P from Hepatitis B virus genotype B1 (isolate Japan/Ry30/2002) (HBV-B).